A 442-amino-acid polypeptide reads, in one-letter code: Prenyltransferase nscD (442 aa).

It belongs to the tryptophan dimethylallyltransferase family.

Its pathway is secondary metabolite biosynthesis. Functionally, prenyltransferase; part of the gene cluster that mediates the biosynthesis of neosartoricin B, a prenylated anthracenone that probably exhibits T-cell antiproliferative activity, suggestive of a physiological role as an immunosuppressive agent. The non-reducing polyketide synthase nscA probably synthesizes and cyclizes the decaketide backbone. The hydrolase nscB then mediates the product release through hydrolysis followed by spontaneous decarboxylation. The prenyltransferase nscD catalyzes the addition of the dimethylallyl group to the aromatic C5. The FAD-dependent monooxygenase nscC is then responsible for the stereospecific hydroxylation at C2. Neosartoricin B can be converted into two additional compounds neosartoricins C and D. Neosartoricin C is a spirocyclic compound that is cyclized through the attack of C3 hydroxyl on C14, followed by dehydration. On the other hand, neosartoricin D is a further cyclized compound in which attack of C2 on C14 in neosartoricin C results in the formation of the acetal-containing dioxabicyclo-octanone ring. Both of these compounds are novel and possibly represent related metabolites of the gene cluster. This chain is Prenyltransferase nscD, found in Trichophyton verrucosum (strain HKI 0517).